The sequence spans 110 residues: UPF0060 membrane protein Francci3_2786 (110 aa).

4 consecutive transmembrane segments (helical) span residues 8–28 (LLFV…WQGV), 33–53 (GPVW…VATL), 62–82 (ILAA…VAVD), and 87–107 (DRYD…IMYA).

Belongs to the UPF0060 family.

The protein localises to the cell membrane. In Frankia casuarinae (strain DSM 45818 / CECT 9043 / HFP020203 / CcI3), this protein is UPF0060 membrane protein Francci3_2786.